The following is a 552-amino-acid chain: CTP synthase (552 aa).

Positions 1–270 (MTKYVFVTGG…DRIICEELKL (270 aa)) are amidoligase domain. S13 is a binding site for CTP. S13 contacts UTP. Residues 14-19 (SLGKGI) and D71 contribute to the ATP site. Mg(2+) is bound by residues D71 and E144. CTP contacts are provided by residues 151–153 (DIE), 191–196 (KTKPTQ), and K227. UTP contacts are provided by residues 191-196 (KTKPTQ) and K227. The region spanning 295–547 (TIGMVGKYVD…VEAALANKQA (253 aa)) is the Glutamine amidotransferase type-1 domain. Position 356 (G356) interacts with L-glutamine. C383 (nucleophile; for glutamine hydrolysis) is an active-site residue. L-glutamine is bound by residues 384-387 (LGMQ), E407, and R473. Catalysis depends on residues H520 and E522.

This sequence belongs to the CTP synthase family. As to quaternary structure, homotetramer.

It carries out the reaction UTP + L-glutamine + ATP + H2O = CTP + L-glutamate + ADP + phosphate + 2 H(+). The enzyme catalyses L-glutamine + H2O = L-glutamate + NH4(+). It catalyses the reaction UTP + NH4(+) + ATP = CTP + ADP + phosphate + 2 H(+). The protein operates within pyrimidine metabolism; CTP biosynthesis via de novo pathway; CTP from UDP: step 2/2. Allosterically activated by GTP, when glutamine is the substrate; GTP has no effect on the reaction when ammonia is the substrate. The allosteric effector GTP functions by stabilizing the protein conformation that binds the tetrahedral intermediate(s) formed during glutamine hydrolysis. Inhibited by the product CTP, via allosteric rather than competitive inhibition. Functionally, catalyzes the ATP-dependent amination of UTP to CTP with either L-glutamine or ammonia as the source of nitrogen. Regulates intracellular CTP levels through interactions with the four ribonucleotide triphosphates. The protein is CTP synthase of Burkholderia cenocepacia (strain HI2424).